The primary structure comprises 229 residues: Cytidylate kinase (229 aa).

12-20 contacts ATP; it reads GPSGAGKGT.

The protein belongs to the cytidylate kinase family. Type 1 subfamily.

Its subcellular location is the cytoplasm. The catalysed reaction is CMP + ATP = CDP + ADP. The enzyme catalyses dCMP + ATP = dCDP + ADP. The chain is Cytidylate kinase from Pseudomonas aeruginosa (strain LESB58).